The chain runs to 425 residues: MDRATFACSTAFFHDYSSSAQGTFSTGHVDFIDKIESFTYSDFFRDYLIPNQPCVFSEKFTDGWGSRRNWVTWGGKPDFDHLLQEFGEAIVPVANCDVKEYNSNPKEQLPFKEYISYWKEYIKNGYRSSRGCLYLKDWHLSRAFPEQDVYTTPVYFSSDWLNEYWDAIAVDDYRFVYMGPKGSWTPFHADVFRSYSWSANICGRKKWLLYPPGQEDYLKDCHGNLPFDVTAPGLQDRSVYPRYNQSQPPVEIVQEAGEIVFIPSGWHHQVYNLEDTISINHNWVNGCNVAIMWCFLQDELAAVQREINEWKDPMDDWHLQCQLIMKSCTGIDYKEFYNFLKVIAENRISILENGLDDEASAKNTPKAAISTLGMLHAVFDLKRTVKVLTSLSANEDFKKLDLTSLSPPQEALLHHLKAAIDTALL.

Residues 141–300 (SRAFPEQDVY…IMWCFLQDEL (160 aa)) form the JmjC domain. Fe cation contacts are provided by histidine 188, aspartate 190, and histidine 268.

The protein belongs to the JMJD6 family. It depends on Fe(2+) as a cofactor.

The protein resides in the cytoplasm. It catalyses the reaction L-lysyl-[protein] + 2-oxoglutarate + O2 = 4-hydroxy-L-lysyl-[protein] + succinate + CO2. Catalyzes the 2-oxoglutarate and iron-dependent C4-lysyl hydroxylation of ETF1 at 'Lys-63' thereby promoting the translational termination efficiency of ETF1. The polypeptide is 2-oxoglutarate and iron-dependent oxygenase JMJD4 (JMJD4) (Gallus gallus (Chicken)).